The following is a 684-amino-acid chain: Pre-mRNA-splicing factor CLF1 (684 aa).

HAT repeat units follow at residues 43-75 (DWQR…FEFD), 77-109 (KDIR…SEIK), 111-143 (KNIN…LEES), 145-176 (GNQG…FETR), 178-209 (LNFE…FEQT), 211-251 (GDIS…WEAS), 253-285 (GEYE…FEKK), 295-327 (IVIA…LVEE), 332-364 (QLTS…ICVR), 374-410 (NDLP…FEIR), 412-443 (NNLL…LEIR), 445-477 (KEFD…LEEN), 518-550 (AEYE…FEST), and 584-622 (ENKH…YEKV).

The protein belongs to the crooked-neck family. As to quaternary structure, associated with the spliceosome.

Its subcellular location is the nucleus. Involved in pre-mRNA splicing and cell cycle progression. Required for the spliceosome assembly and initiation of the DNA replication. This is Pre-mRNA-splicing factor CLF1 (CLF1) from Kluyveromyces lactis (strain ATCC 8585 / CBS 2359 / DSM 70799 / NBRC 1267 / NRRL Y-1140 / WM37) (Yeast).